The sequence spans 132 residues: uncharacterized protein (132 aa).

Transmembrane regions (helical) follow at residues 12–32 and 37–57; these read VIGFVVLFCVLELVFYLKKLY and LTLAVFGIFSLLFFLLYIPVL.

The protein resides in the cell membrane. This is an uncharacterized protein from Methanocaldococcus jannaschii (strain ATCC 43067 / DSM 2661 / JAL-1 / JCM 10045 / NBRC 100440) (Methanococcus jannaschii).